Consider the following 197-residue polypeptide: 3-isopropylmalate dehydratase small subunit (197 aa).

Belongs to the LeuD family. LeuD type 1 subfamily. In terms of assembly, heterodimer of LeuC and LeuD.

It carries out the reaction (2R,3S)-3-isopropylmalate = (2S)-2-isopropylmalate. It functions in the pathway amino-acid biosynthesis; L-leucine biosynthesis; L-leucine from 3-methyl-2-oxobutanoate: step 2/4. Its function is as follows. Catalyzes the isomerization between 2-isopropylmalate and 3-isopropylmalate, via the formation of 2-isopropylmaleate. This Mycobacterium sp. (strain KMS) protein is 3-isopropylmalate dehydratase small subunit.